The following is a 389-amino-acid chain: 11-beta-hydroxysteroid dehydrogenase-like 5 (389 aa).

Residues 11-31 (LVAPPATMVVMAFAWPLLSFI) traverse the membrane as a helical; Signal-anchor for type II membrane protein segment. NADP(+) is bound by residues 56–82 (GASS…VARR) and aspartate 107. Position 186 (serine 186) interacts with substrate. The active-site Proton acceptor is tyrosine 199. NADP(+) contacts are provided by residues 199 to 203 (YSAAK) and lysine 203. The segment at 337–381 (LMLEGGPPRVPASPPRYTASPPHYTASPPRYPASPPRYPASPPRF) is disordered. A compositionally biased stretch (pro residues) spans 365–378 (PRYPASPPRYPASP).

Belongs to the short-chain dehydrogenases/reductases (SDR) family.

It is found in the membrane. In Arabidopsis thaliana (Mouse-ear cress), this protein is 11-beta-hydroxysteroid dehydrogenase-like 5 (HSD5).